The chain runs to 566 residues: NXPE family member 3 (566 aa).

A signal peptide spans 1–32 (MEKYFPKYVPFFSLLALSGLLYLLWSITSLES). Asn-64, Asn-172, Asn-242, Asn-303, and Asn-344 each carry an N-linked (GlcNAc...) asparagine glycan.

This sequence belongs to the NXPE family.

It is found in the secreted. This chain is NXPE family member 3 (nxpe3), found in Danio rerio (Zebrafish).